The chain runs to 443 residues: POU domain, class 3, transcription factor 3-B (443 aa).

Disordered stretches follow at residues 21–40 (IVHSDSGGGMQQGSAAVTSV), 100–150 (SPWS…AGAW), and 182–244 (NGML…PTSD). Residues 101–121 (PWSSSPVGMTGSPQQQDVKNN) show a composition bias toward polar residues. Basic residues predominate over residues 210 to 225 (SHHHHHHHQHQHHQQA). Residues 238–312 (EDTPTSDDLE…LLNKWLEEAD (75 aa)) form the POU-specific domain. The residue at position 317 (S317) is a Phosphoserine. The segment at residues 330–389 (KRKKRTSIEVSVKGALESHFLKCPKPSAQEITSLADNLQLEKEVVRVWFCNRRQKEKRMT) is a DNA-binding region (homeobox).

This sequence belongs to the POU transcription factor family. Class-3 subfamily. As to expression, predominantly expressed in the central nervous system.

The protein localises to the nucleus. Transcription factor that may play important roles in patterning the embryonic brain. This is POU domain, class 3, transcription factor 3-B (pou3f3b) from Danio rerio (Zebrafish).